The chain runs to 900 residues: Methionine--tRNA ligase, cytoplasmic (900 aa).

In terms of domain architecture, GST C-terminal spans 74-198 (GWEQDDLTNQ…VLKQQGVLAL (125 aa)). A 'HIGH' region motif is present at residues 273–283 (PYVNNVPHLGN). Positions 593–597 (KFSKS) match the 'KMSKS' region motif. Lysine 596 lines the ATP pocket. Serine 825 is subject to Phosphoserine. At threonine 835 the chain carries Phosphothreonine. One can recognise a WHEP-TRS domain in the interval 841–897 (QIQALMDEVTKQGNIVRELKAQKADKNEVAAEVAKLLDLKKQLAVAEGKPPEAPKGK).

The protein belongs to the class-I aminoacyl-tRNA synthetase family. As to quaternary structure, monomer. Part of a multisubunit complex that groups tRNA ligases for Arg (RARS1), Asp (DARS1), Gln (QARS1), Ile (IARS1), Leu (LARS1), Lys (KARS1), Met (MARS1) the bifunctional ligase for Glu and Pro (EPRS1) and the auxiliary subunits AIMP1/p43, AIMP2/p38 and EEF1E1/p18. Forms a linear complex that contains MARS1, EEF1E1, EPRS1 and AIMP2 that is at the core of the multisubunit complex.

The protein resides in the cytoplasm. It localises to the cytosol. The protein localises to the nucleus. It is found in the nucleolus. The catalysed reaction is tRNA(Met) + L-methionine + ATP = L-methionyl-tRNA(Met) + AMP + diphosphate. Enzyme activity is increased by spermidine, EEF1A1, and when the Mg(2+) concentration is increased from 5 mM to 13 mM (in vitro), possibly by promoting the dissociation of the complex between the enzyme and its product. Catalyzes the specific attachment of an amino acid to its cognate tRNA in a 2 step reaction: the amino acid (AA) is first activated by ATP to form AA-AMP and then transferred to the acceptor end of the tRNA. Plays a role in the synthesis of ribosomal RNA in the nucleolus. The sequence is that of Methionine--tRNA ligase, cytoplasmic from Homo sapiens (Human).